The sequence spans 451 residues: MASPSNHSASSLTAEPSGALLGSITVPGDKSISHRALIFGALAVGETRIGGLLEGEDVLATAETMRRLGAEVERHADGTWSVHGVGVGGLKEPDQPLDFGNSGTGARLVMGLVAGHPITATFIGDASLSRRPMGRVIAPLTETGATFHAREGGRLPLTLTGAGRALPITYRLPVASAQVKSAVLLAGLNAPGVTTVIEETPTRDHTERMLRAFGAHIEVEDGPRGLIVIRLTGEPELKPCRISVPGDPSSAAFPVVAALLTPGSEITVTGITLNPHRAGLYTTLMEMGGDIEVMNQREEGGEPVADLRVRASRLKGIEVPPARAASMIDEYPVLAIAAAFAEGETRMLGIHELRVKESDRIAATASGLRANGVKVHESDDGMVVEGRSGEVGGGGHVATHIDHRIAMSFLVMGLAAQKPVTVDDAAMIATSFPNFTGLMRGLGASFVGRAQ.

Lys30, Ser31, and Arg35 together coordinate 3-phosphoshikimate. Lys30 is a phosphoenolpyruvate binding site. Positions 103 and 131 each coordinate phosphoenolpyruvate. The 3-phosphoshikimate site is built by Ser176, Gln178, Asp329, and Lys356. Gln178 is a phosphoenolpyruvate binding site. Asp329 acts as the Proton acceptor in catalysis. Residues Arg360 and Arg404 each coordinate phosphoenolpyruvate.

This sequence belongs to the EPSP synthase family. In terms of assembly, monomer.

The protein resides in the cytoplasm. It carries out the reaction 3-phosphoshikimate + phosphoenolpyruvate = 5-O-(1-carboxyvinyl)-3-phosphoshikimate + phosphate. It participates in metabolic intermediate biosynthesis; chorismate biosynthesis; chorismate from D-erythrose 4-phosphate and phosphoenolpyruvate: step 6/7. In terms of biological role, catalyzes the transfer of the enolpyruvyl moiety of phosphoenolpyruvate (PEP) to the 5-hydroxyl of shikimate-3-phosphate (S3P) to produce enolpyruvyl shikimate-3-phosphate and inorganic phosphate. The chain is 3-phosphoshikimate 1-carboxyvinyltransferase from Parvibaculum lavamentivorans (strain DS-1 / DSM 13023 / NCIMB 13966).